We begin with the raw amino-acid sequence, 805 residues long: Leucine--tRNA ligase (805 aa).

The short motif at 40–51 (PYPSGAGLHVGH) is the 'HIGH' region element. The short motif at 576-580 (KMSKS) is the 'KMSKS' region element. K579 is an ATP binding site.

It belongs to the class-I aminoacyl-tRNA synthetase family.

The protein localises to the cytoplasm. It carries out the reaction tRNA(Leu) + L-leucine + ATP = L-leucyl-tRNA(Leu) + AMP + diphosphate. In Geobacillus kaustophilus (strain HTA426), this protein is Leucine--tRNA ligase.